Reading from the N-terminus, the 445-residue chain is MREIVHLQTGQCGNQIGAKFWEVVSDEHGIERDGLYKGNNDLQLERISVYYNEIGASKYVPRAVLVDLEPGTMDSVRSGPLGSLFRPDNFVFGQSGAGNNWAKGHYTEGAELVDSVLDVVRKEAEGCDCLQGFQITHSLGGGTGAGMGTLLISKIREEYPDRMMCTYSVVPSPKVSDTVVEPYNATLSVHQLVENSDETFCIDNEALYDICFRTLKLSTPTYGDLNHLVSIVMSGITTCLRFPGQLNSDLRKLAVNMVPFPRLHFFMTGFAPLTARGSAQYRAVTVPELTQQMFDAKNMMAASDPRHGRYLTVAAVFRGKVSMKEVEEQMQNVQNKNSAYFVEWIPNNVLTAQCDIPPRGLKMAVTFLGNSTAIQELFKRVSDQFTAMFKRKAFLHWYTQEGMDEMEFTEAESNMQDLVAEYQQYQDATVEEEGEYEDEVLEDEQ.

The GTP site is built by Gln-11, Glu-69, Ser-138, Gly-142, Thr-143, Gly-144, Asn-204, and Asn-226. Residue Glu-69 participates in Mg(2+) binding.

It belongs to the tubulin family. As to quaternary structure, dimer of alpha and beta chains. A typical microtubule is a hollow water-filled tube with an outer diameter of 25 nm and an inner diameter of 15 nM. Alpha-beta heterodimers associate head-to-tail to form protofilaments running lengthwise along the microtubule wall with the beta-tubulin subunit facing the microtubule plus end conferring a structural polarity. Microtubules usually have 13 protofilaments but different protofilament numbers can be found in some organisms and specialized cells. The cofactor is Mg(2+).

Its subcellular location is the cytoplasm. The protein resides in the cytoskeleton. Its function is as follows. Tubulin is the major constituent of microtubules, a cylinder consisting of laterally associated linear protofilaments composed of alpha- and beta-tubulin heterodimers. Microtubules grow by the addition of GTP-tubulin dimers to the microtubule end, where a stabilizing cap forms. Below the cap, tubulin dimers are in GDP-bound state, owing to GTPase activity of alpha-tubulin. In Coprinopsis cinerea (strain Okayama-7 / 130 / ATCC MYA-4618 / FGSC 9003) (Inky cap fungus), this protein is Tubulin beta chain.